Reading from the N-terminus, the 122-residue chain is Large ribosomal subunit protein uL14 (122 aa).

The protein belongs to the universal ribosomal protein uL14 family. Part of the 50S ribosomal subunit. Forms a cluster with proteins L3 and L19. In the 70S ribosome, L14 and L19 interact and together make contacts with the 16S rRNA in bridges B5 and B8.

Binds to 23S rRNA. Forms part of two intersubunit bridges in the 70S ribosome. This chain is Large ribosomal subunit protein uL14, found in Salinispora tropica (strain ATCC BAA-916 / DSM 44818 / JCM 13857 / NBRC 105044 / CNB-440).